The following is a 1136-amino-acid chain: Phytochrome (1136 aa).

The interval 1–28 (MSTTRPRAATHSASSGSVSRSSKHSARV) is disordered. Positions 11 to 20 (HSASSGSVSR) are enriched in low complexity. Positions 231–414 (DIRLLCDTVV…VFGIQLNKEV (184 aa)) constitute a GAF domain. Position 336 (Cys-336) interacts with phytochromobilin. PAS domains are found at residues 629-699 (VTNE…LQGE) and 762-833 (DYRA…TKLR). The Histidine kinase domain occupies 913–1132 (YIRQEIRNPL…IINVEFPLAQ (220 aa)).

This sequence belongs to the phytochrome family. As to quaternary structure, homodimer. In terms of processing, contains one covalently linked phytochromobilin chromophore.

Its function is as follows. Regulatory photoreceptor which exists in two forms that are reversibly interconvertible by light: the Pr form that absorbs maximally in the red region of the spectrum and the Pfr form that absorbs maximally in the far-red region. Photoconversion of Pr to Pfr induces an array of morphogenic responses, whereas reconversion of Pfr to Pr cancels the induction of those responses. Pfr controls the expression of a number of nuclear genes including those encoding the small subunit of ribulose-bisphosphate carboxylase, chlorophyll A/B binding protein, protochlorophyllide reductase, rRNA, etc. It also controls the expression of its own gene(s) in a negative feedback fashion. This is Phytochrome from Picea abies (Norway spruce).